The sequence spans 350 residues: Dihydroorotase (350 aa).

Zn(2+) is bound by residues His-17 and His-19. Substrate-binding positions include 19–21 and Asn-45; that span reads HLR. Residues Lys-103, His-140, and His-178 each coordinate Zn(2+). Lys-103 is subject to N6-carboxylysine. A substrate-binding site is contributed by His-140. Position 223 (Leu-223) interacts with substrate. A Zn(2+)-binding site is contributed by Asp-251. The active site involves Asp-251. The substrate site is built by His-255 and Ala-267.

The protein belongs to the metallo-dependent hydrolases superfamily. DHOase family. Class II DHOase subfamily. Homodimer. It depends on Zn(2+) as a cofactor.

It catalyses the reaction (S)-dihydroorotate + H2O = N-carbamoyl-L-aspartate + H(+). It functions in the pathway pyrimidine metabolism; UMP biosynthesis via de novo pathway; (S)-dihydroorotate from bicarbonate: step 3/3. Its function is as follows. Catalyzes the reversible cyclization of carbamoyl aspartate to dihydroorotate. This chain is Dihydroorotase, found in Erwinia tasmaniensis (strain DSM 17950 / CFBP 7177 / CIP 109463 / NCPPB 4357 / Et1/99).